A 608-amino-acid chain; its full sequence is Phosphogluconate dehydratase (608 aa).

Residues Cys154 and Cys221 each contribute to the [4Fe-4S] cluster site.

Belongs to the IlvD/Edd family. [4Fe-4S] cluster is required as a cofactor.

The catalysed reaction is 6-phospho-D-gluconate = 2-dehydro-3-deoxy-6-phospho-D-gluconate + H2O. The protein operates within carbohydrate metabolism; Entner-Doudoroff pathway. Its function is as follows. Catalyzes the dehydration of 6-phospho-D-gluconate to 2-dehydro-3-deoxy-6-phospho-D-gluconate. This chain is Phosphogluconate dehydratase, found in Pseudomonas aeruginosa (strain ATCC 15692 / DSM 22644 / CIP 104116 / JCM 14847 / LMG 12228 / 1C / PRS 101 / PAO1).